A 200-amino-acid chain; its full sequence is Dephospho-CoA kinase (200 aa).

Residues I3–E200 form the DPCK domain. Residue G11–T16 participates in ATP binding.

It belongs to the CoaE family.

The protein localises to the cytoplasm. It catalyses the reaction 3'-dephospho-CoA + ATP = ADP + CoA + H(+). Its pathway is cofactor biosynthesis; coenzyme A biosynthesis; CoA from (R)-pantothenate: step 5/5. In terms of biological role, catalyzes the phosphorylation of the 3'-hydroxyl group of dephosphocoenzyme A to form coenzyme A. The sequence is that of Dephospho-CoA kinase from Corynebacterium diphtheriae (strain ATCC 700971 / NCTC 13129 / Biotype gravis).